The chain runs to 36 residues: Peruvianin-1 (36 aa).

It belongs to the germin family. Homohexamer, possibly consisting of a trimer of dimers. Glycosylated.

With respect to regulation, inhibited by iodoacetamide and trans-epoxysuccinyl-L-leucylamido(4-guanidino)butane (E-64) but not by phenylmethylsulfonyl fluoride (PMSF), pepstatin-A, ethylenediamine tetra acetic acid (EDTA) or ethylene glycol tetraacetic acid (EGTA). Its function is as follows. Cysteine protease able to degrade azocasein and benzoyl-arginine-beta-naphtylamide (BANA) in vitro. This is Peruvianin-1 from Thevetia peruviana (Yellow oleander).